Consider the following 262-residue polypeptide: 5'-nucleotidase SurE (262 aa).

Asp-11, Asp-12, Ser-43, and Asn-101 together coordinate a divalent metal cation.

It belongs to the SurE nucleotidase family. The cofactor is a divalent metal cation.

It is found in the cytoplasm. The enzyme catalyses a ribonucleoside 5'-phosphate + H2O = a ribonucleoside + phosphate. Nucleotidase that shows phosphatase activity on nucleoside 5'-monophosphates. This chain is 5'-nucleotidase SurE, found in Prochlorococcus marinus (strain NATL1A).